Here is a 233-residue protein sequence, read N- to C-terminus: Ribosomal RNA-processing protein 14-C (233 aa).

Residues 32 to 65 (DRALLLQRRKEKAKARAEAKKLAKKESKAKQESK) adopt a coiled-coil conformation. Over residues 47–64 (RAEAKKLAKKESKAKQES) the composition is skewed to basic and acidic residues. 3 disordered regions span residues 47–87 (RAEA…DNHK), 130–149 (KRRI…ESDK), and 164–233 (DNEQ…SKKK). Ser-75 is modified (phosphoserine). Residues 122 to 223 (ALKHLEAKKR…ESKKSKKGKA (102 aa)) adopt a coiled-coil conformation. Basic and acidic residues-rich tracts occupy residues 133 to 149 (IESM…ESDK) and 180 to 209 (KKKS…EENL). Over residues 210–233 (KKRRESKKSKKGKAPKKKKPSKKK) the composition is skewed to basic residues.

It belongs to the SURF6 family. Component of the 90S and 60S pre-ribosomal particles.

It is found in the nucleus. It localises to the nucleolus. Involved in ribosome biogenesis and cell polarity. Required for the synthesis of both 40S and 60S ribosomal subunits and may also play some direct role in correct positioning of the mitotic spindle during mitosis. This Schizosaccharomyces pombe (strain 972 / ATCC 24843) (Fission yeast) protein is Ribosomal RNA-processing protein 14-C (rrp14c).